A 122-amino-acid polypeptide reads, in one-letter code: Ribonuclease P protein component (122 aa).

It belongs to the RnpA family. In terms of assembly, consists of a catalytic RNA component (M1 or rnpB) and a protein subunit.

The catalysed reaction is Endonucleolytic cleavage of RNA, removing 5'-extranucleotides from tRNA precursor.. Its function is as follows. RNaseP catalyzes the removal of the 5'-leader sequence from pre-tRNA to produce the mature 5'-terminus. It can also cleave other RNA substrates such as 4.5S RNA. The protein component plays an auxiliary but essential role in vivo by binding to the 5'-leader sequence and broadening the substrate specificity of the ribozyme. This Synechococcus elongatus (strain ATCC 33912 / PCC 7942 / FACHB-805) (Anacystis nidulans R2) protein is Ribonuclease P protein component.